The following is an 85-amino-acid chain: U4-theraphotoxin-Hhn1d (85 aa).

A signal peptide spans 1 to 22 (MKVTLIAILTCAAVLVLHTTAA). Positions 23-48 (EELEAESQLMEVGMPDTELAAVDEER) are excised as a propeptide. Disulfide bonds link Cys52-Cys66, Cys56-Cys77, and Cys71-Cys82.

Belongs to the neurotoxin 12 (Hwtx-2) family. 02 (Hwtx-2) subfamily. Expressed by the venom gland.

It localises to the secreted. Functionally, postsynaptic neurotoxin. The polypeptide is U4-theraphotoxin-Hhn1d (Cyriopagopus hainanus (Chinese bird spider)).